The sequence spans 84 residues: Small ribosomal subunit protein uS17 (84 aa).

Belongs to the universal ribosomal protein uS17 family. As to quaternary structure, part of the 30S ribosomal subunit.

Its function is as follows. One of the primary rRNA binding proteins, it binds specifically to the 5'-end of 16S ribosomal RNA. In Alkaliphilus metalliredigens (strain QYMF), this protein is Small ribosomal subunit protein uS17.